A 124-amino-acid chain; its full sequence is Fluoride-specific ion channel FluC (124 aa).

4 consecutive transmembrane segments (helical) span residues 4–24 (IVLL…LAGL), 35–55 (LGTF…WGVC), 67–87 (VVLL…TFES), and 96–116 (WLAF…LLWL). Glycine 75 and threonine 78 together coordinate Na(+).

This sequence belongs to the fluoride channel Fluc/FEX (TC 1.A.43) family.

It is found in the cell inner membrane. The enzyme catalyses fluoride(in) = fluoride(out). Its activity is regulated as follows. Na(+) is not transported, but it plays an essential structural role and its presence is essential for fluoride channel function. In terms of biological role, fluoride-specific ion channel. Important for reducing fluoride concentration in the cell, thus reducing its toxicity. The polypeptide is Fluoride-specific ion channel FluC (Nitratidesulfovibrio vulgaris (strain DSM 19637 / Miyazaki F) (Desulfovibrio vulgaris)).